The primary structure comprises 665 residues: Probable protein transport Sec1a (665 aa).

The segment at 543 to 594 is disordered; the sequence is PSPSFRGIPSASTQTSPAHQPAQSMRSRRTGGTWARPRDSDDGYSSDSVLKH. 2 stretches are compositionally biased toward polar residues: residues 552-567 and 585-594; these read SASTQTSPAHQPAQSM and GYSSDSVLKH.

It belongs to the STXBP/unc-18/SEC1 family.

Its function is as follows. Involved in the vesicle trafficking. Binds syntaxins. The chain is Probable protein transport Sec1a from Oryza sativa subsp. japonica (Rice).